The sequence spans 240 residues: Ubiquinone biosynthesis O-methyltransferase (240 aa).

S-adenosyl-L-methionine contacts are provided by R44, G64, D85, and M129.

Belongs to the methyltransferase superfamily. UbiG/COQ3 family.

The catalysed reaction is a 3-demethylubiquinol + S-adenosyl-L-methionine = a ubiquinol + S-adenosyl-L-homocysteine + H(+). The enzyme catalyses a 3-(all-trans-polyprenyl)benzene-1,2-diol + S-adenosyl-L-methionine = a 2-methoxy-6-(all-trans-polyprenyl)phenol + S-adenosyl-L-homocysteine + H(+). It participates in cofactor biosynthesis; ubiquinone biosynthesis. Its function is as follows. O-methyltransferase that catalyzes the 2 O-methylation steps in the ubiquinone biosynthetic pathway. The protein is Ubiquinone biosynthesis O-methyltransferase of Escherichia coli (strain K12 / MC4100 / BW2952).